The chain runs to 241 residues: Enterotoxin type H (241 aa).

The N-terminal stretch at 1 to 24 is a signal peptide; sequence MINKIKILFSFLALLLSFTSYAKA. Cys106 and Cys116 are oxidised to a cystine. 3 residues coordinate Zn(2+): Asp191, His230, and Asp232.

It belongs to the staphylococcal/streptococcal toxin family. In terms of assembly, interacts with host MHC class II molecules composed of alpha/HLA-DRA and beta/HLA-DRB1 chains. Interacts with host TCR alpha-chain TRAV27. It depends on Zn(2+) as a cofactor.

Its subcellular location is the secreted. Its function is as follows. Staphylococcal enterotoxin that activates the host immune system by binding as unprocessed molecules to major histocompatibility (MHC) complex class II and T-cell receptor (TCR) molecules via their alpha domain, in particular TRAV27. In turn, this ternary complex activates a large number of T-lymphocytes initiating a systemic release of pro-inflammatory cytokines. Also causes the intoxication staphylococcal food poisoning syndrome. The illness characterized by high fever, hypotension, diarrhea, shock, and in some cases death. The polypeptide is Enterotoxin type H (entH) (Staphylococcus aureus).